Here is a 713-residue protein sequence, read N- to C-terminus: UvrABC system protein B (713 aa).

The region spanning 35–421 (RRIRAGEKDV…GDGFVEQIIR (387 aa)) is the Helicase ATP-binding domain. 48-55 (GATGTGKS) serves as a coordination point for ATP. Positions 101-124 (YYDYYQPEAYVPQSDTYIEKDSSI) match the Beta-hairpin motif. The Helicase C-terminal domain occupies 438–604 (QIDDLVHEIR…PLRKKINDIV (167 aa)). Residues 624 to 663 (QAKDGKGAKAPVPSLGGKAAAKGAKSAKGKAKETVPTDRP) are disordered. Positions 639-649 (GGKAAAKGAKS) are enriched in low complexity. Residues 653–663 (KAKETVPTDRP) are compositionally biased toward basic and acidic residues. Residues 668 to 703 (AEEIEELTNRMRAAAADLQFEIAARLRDEVSEMKKE) form the UVR domain.

Belongs to the UvrB family. Forms a heterotetramer with UvrA during the search for lesions. Interacts with UvrC in an incision complex.

The protein resides in the cytoplasm. Functionally, the UvrABC repair system catalyzes the recognition and processing of DNA lesions. A damage recognition complex composed of 2 UvrA and 2 UvrB subunits scans DNA for abnormalities. Upon binding of the UvrA(2)B(2) complex to a putative damaged site, the DNA wraps around one UvrB monomer. DNA wrap is dependent on ATP binding by UvrB and probably causes local melting of the DNA helix, facilitating insertion of UvrB beta-hairpin between the DNA strands. Then UvrB probes one DNA strand for the presence of a lesion. If a lesion is found the UvrA subunits dissociate and the UvrB-DNA preincision complex is formed. This complex is subsequently bound by UvrC and the second UvrB is released. If no lesion is found, the DNA wraps around the other UvrB subunit that will check the other stand for damage. The chain is UvrABC system protein B from Streptomyces avermitilis (strain ATCC 31267 / DSM 46492 / JCM 5070 / NBRC 14893 / NCIMB 12804 / NRRL 8165 / MA-4680).